We begin with the raw amino-acid sequence, 349 residues long: 5,10-methylenetetrahydromethanopterin reductase (349 aa).

Belongs to the mer family. In terms of assembly, homotetramer composed of two loosely associated dimers.

The protein localises to the cytoplasm. It catalyses the reaction 5-methyl-5,6,7,8-tetrahydromethanopterin + oxidized coenzyme F420-(gamma-L-Glu)(n) + H(+) = 5,10-methylenetetrahydromethanopterin + reduced coenzyme F420-(gamma-L-Glu)(n). It participates in one-carbon metabolism; methanogenesis from CO(2); methyl-coenzyme M from 5,10-methylene-5,6,7,8-tetrahydromethanopterin: step 1/2. With respect to regulation, requires the presence of relatively high concentrations of either sulfate or phosphate for maximal activity. In terms of biological role, catalyzes the reversible reduction of methylene-H(4)MPT to methyl-H(4)MPT. The polypeptide is 5,10-methylenetetrahydromethanopterin reductase (Methanopyrus kandleri (strain AV19 / DSM 6324 / JCM 9639 / NBRC 100938)).